A 323-amino-acid polypeptide reads, in one-letter code: MSQNSSFSDIFEDGCDLTYDPLPENLKYLTQLFYMVPGIIIHFRILSIMLFQHRKIYMIQSFFIIFSMDSIASLTQLILDLFIQRVIIYIPQLCPSLYPLFEHYVLFPNIIFSIYNYMRAAKSIIQIFLTVNRMTCVLAPLRYSQIWRRFIPVTIAFITLSPFLVIWNVIISETFPVSIFGGFTLAYTKRVRWASLSMFQMIFMAISLTITVFTTSITLFKMRRLENRLKSSERTLCFASFYMSAAFFSAALFQSYFAFFSITAAYTDLVYFLQGFAFDVLNVGSPIVMVLISGQLRYHVIPVKSMAPKHSTVVSVTSVIRKT.

A run of 7 helical transmembrane segments spans residues 31-51 (QLFY…IMLF), 63-83 (FIIF…DLFI), 98-117 (YPLF…IYNY), 151-171 (IPVT…NVII), 193-213 (WASL…ITVF), 245-265 (AAFF…ITAA), and 272-292 (FLQG…MVLI).

Belongs to the nematode receptor-like protein srg family.

The protein resides in the membrane. This is Serpentine receptor class gamma-5 (srg-5) from Caenorhabditis elegans.